A 692-amino-acid polypeptide reads, in one-letter code: Furin-like protease kpc-1 (692 aa).

Residues 1–33 (MSNISWYRHCSVRLQLVTLALFLLLGSASLGSA) form the signal peptide. Asparagine 3 carries an N-linked (GlcNAc...) asparagine glycan. Positions 34 to 139 (HIDEEFEDDV…QQVAKRRVKR (106 aa)) are excised as a propeptide. The Lumenal segment spans residues 140-670 (GYRRIRRHTD…RSVQMEATSS (531 aa)). Residues 152–177 (DIFEEDDDGTQISKSRNRKHPDPNDP) are disordered. Residue aspartate 176 coordinates Ca(2+). A Peptidase S8 domain is found at 182-503 (MWYLNRGEHH…YGLMDAGAMV (322 aa)). Aspartate 221 (charge relay system) is an active-site residue. Aspartate 222 lines the substrate pocket. Ca(2+)-binding residues include aspartate 230, aspartate 242, aspartate 247, and aspartate 249. Residues 230 to 249 (DISPNYDERASYDVNDRDND) form a disordered region. Substrate is bound at residue 259–260 (EN). Histidine 262 acts as the Charge relay system in catalysis. Isoleucine 273 provides a ligand contact to Ca(2+). N-linked (GlcNAc...) asparagine glycosylation is present at asparagine 275. Asparagine 276, leucine 278, and isoleucine 280 together coordinate Ca(2+). 2 cysteine pairs are disulfide-bonded: cysteine 279/cysteine 428 and cysteine 371/cysteine 401. Residues glutamate 304, 321-326 (SWGPDD), aspartate 332, and 360-363 (ASGN) each bind substrate. Aspartate 326 lines the Ca(2+) pocket. Aspartate 369 contacts Ca(2+). Substrate-binding residues include aspartate 374 and tyrosine 376. Glutamate 399 is a Ca(2+) binding site. Residue serine 436 is the Charge relay system of the active site. Serine 436 is a substrate binding site. N-linked (GlcNAc...) asparagine glycans are attached at residues asparagine 455 and asparagine 487. One can recognise a P/Homo B domain in the interval 512–646 (VDEQHRCRQF…ELVLYGTDRE (135 aa)). A disulfide bond links cysteine 518 and cysteine 544. The Cell attachment site motif lies at 570–572 (RGD). A helical transmembrane segment spans residues 671–692 (GTQYSIFHVITLVILTFSQILY).

This sequence belongs to the peptidase S8 family. Furin subfamily. Interacts (via extracellular domain) with receptor dma-1 (via extracellular domain); the interaction promotes dma-1 internalization. Ca(2+) serves as cofactor. In terms of tissue distribution, expressed in the nervous system including the ventral nerve cord, the nerve ring and the retrovesicular ganglion, and in epithelial cells. Expressed in IL2 neurons. Expressed in PVD mechanosensory neurons. Expressed in pharynx with strong expression in the g2 pharyngeal gland cells and vpi pharyngeal intestinal valve cells. Expressed in intestine.

Its subcellular location is the cell membrane. The protein localises to the perikaryon. The protein resides in the cell projection. It is found in the axon. Its function is as follows. Furin-like protease which cleaves proproteins at the RX(K/R)R consensus motif. During neuronal development, regulates the formation and extension of dendrite branches and cellular positioning of various type of neurons. Together with chin-1 and cdc-42, plays a role in the development of the neuropil and is required for the guidance of axons from neurons, including SubL pioneer neurons and AIY interneurons, into the nerve ring. Its role in axon guidance in glia and pioneer neurons may be through ensuring the fmi-1 protein is correctly localized to the nerve ring. Promotes the formation, extension and self-avoidance of dendritic branches of PVD and FLP mechanosensory neurons. In PVD neurons, regulates plasma membrane levels of branching receptor dma-1 by targeting it to late endosomes and thus promotes normal dendrite branching and dendrite self-avoidance. Also controls dendrite extension in AIY and D-type motoneurons, dendrite branching in AQR sensory neurons and VC4/5 motoneurons, the normal number of dendritic branches in AVL neurons and the positioning of HSN and ALM/PLM neurons. Dispensable for maintaining dendrite branching in adults. Also regulates dauer-specific dendritic branching of IL2 neurons and dauer-specific nictation behavior. Under adverse environmental conditions, may promote dauer formation by processing insulin-like proteins ins-1 and ins-18, two daf-2/InsR antagonists. This chain is Furin-like protease kpc-1, found in Caenorhabditis elegans.